Reading from the N-terminus, the 247-residue chain is Protein ABHD14A (247 aa).

Residues 11–31 (AALLGLGLLLVFLLYMGLPGP) traverse the membrane as a helical; Signal-anchor for type II membrane protein segment. N43 carries N-linked (GlcNAc...) asparagine glycosylation. Residues S147, D198, and H225 each act as charge relay system in the active site.

It belongs to the AB hydrolase superfamily. ABHD14 family. Widely expressed. Higher expression is detected in brain, kidney, heart, testis, ovary and uterus.

It localises to the cytoplasm. It is found in the membrane. Its function is as follows. Possible role in granule neuron development. This is Protein ABHD14A from Mus musculus (Mouse).